The following is a 305-amino-acid chain: Glutaminase (305 aa).

Substrate is bound by residues Ser61, Asn113, Glu158, Asn165, Tyr189, Tyr241, and Val259.

This sequence belongs to the glutaminase family. As to quaternary structure, homotetramer.

It catalyses the reaction L-glutamine + H2O = L-glutamate + NH4(+). The polypeptide is Glutaminase (Clostridium botulinum (strain 657 / Type Ba4)).